We begin with the raw amino-acid sequence, 329 residues long: Olfactory receptor 5AL1 (329 aa).

At 1–44 (MCALKGFLEENFYTYSVAKGNHSTVYEFILLGLTDNAELQVTLF) the chain is on the extracellular side. Asparagine 21 carries N-linked (GlcNAc...) asparagine glycosylation. The chain crosses the membrane as a helical span at residues 45-65 (GIFLVVYLASFMGNFGLIMLI). Topologically, residues 66–73 (QISPQLHT) are cytoplasmic. A helical transmembrane segment spans residues 74–94 (PMYFFLSHLAFVDFSFTSSVA). Over 95–113 (PNTLVNFLCEVKSITFYAC) the chain is Extracellular. The cysteines at positions 113 and 205 are disulfide-linked. The helical transmembrane segment at 114-134 (AIQVCCFITFVVCELYLLSIM) threads the bilayer. Residues 135–157 (AYDRYVAICNPLLYVILIPRKLC) are Cytoplasmic-facing. A helical membrane pass occupies residues 158-178 (IKLIASTYVYGFTVGLVQTVA). Topologically, residues 179-220 (TSYLSFCDSNVINHFYHDDVPLVALACSDTHVKELMLLIIAG) are extracellular. A helical membrane pass occupies residues 221 to 241 (FNTLCSLVIVLISYGFIFFAI). Residues 242 to 253 (LRIHSAEGRQKA) lie on the Cytoplasmic side of the membrane. Residues 254–274 (FSTSASHLTSITIFYGTIIFM) form a helical membrane-spanning segment. Over 275–287 (YPQPKSSHSLNMD) the chain is Extracellular. Residues 288 to 308 (KVASVFNVVVIPTLNPLIYSL) form a helical membrane-spanning segment. At 309 to 329 (RNQEVKNALKRIIEKLCLAVK) the chain is on the cytoplasmic side.

It belongs to the G-protein coupled receptor 1 family.

The protein localises to the cell membrane. In terms of biological role, odorant receptor. The sequence is that of Olfactory receptor 5AL1 (OR5AL1) from Homo sapiens (Human).